The sequence spans 513 residues: ATP synthase subunit alpha (513 aa).

171 to 178 (GDRQIGKT) contacts ATP.

The protein belongs to the ATPase alpha/beta chains family. F-type ATPases have 2 components, CF(1) - the catalytic core - and CF(0) - the membrane proton channel. CF(1) has five subunits: alpha(3), beta(3), gamma(1), delta(1), epsilon(1). CF(0) has three main subunits: a(1), b(2) and c(9-12). The alpha and beta chains form an alternating ring which encloses part of the gamma chain. CF(1) is attached to CF(0) by a central stalk formed by the gamma and epsilon chains, while a peripheral stalk is formed by the delta and b chains.

The protein localises to the cell inner membrane. It carries out the reaction ATP + H2O + 4 H(+)(in) = ADP + phosphate + 5 H(+)(out). Functionally, produces ATP from ADP in the presence of a proton gradient across the membrane. The alpha chain is a regulatory subunit. The protein is ATP synthase subunit alpha of Wolbachia sp. subsp. Drosophila simulans (strain wRi).